A 420-amino-acid polypeptide reads, in one-letter code: UDP-N-acetyl-D-mannosamine dehydrogenase (420 aa).

Residues Tyr13, Ile14, Asp33, Thr85, and Thr126 each coordinate NAD(+). UDP-N-acetyl-alpha-D-mannosaminouronate contacts are provided by Arg160, Val161, Lys212, Asn216, Arg219, His250, Arg252, and Gly263. Lys212 serves as the catalytic Proton donor/acceptor. Cys266 functions as the Nucleophile in the catalytic mechanism. Positions 330 and 331 each coordinate UDP-N-acetyl-alpha-D-mannosaminouronate. Arg338 contributes to the NAD(+) binding site. Lys416 provides a ligand contact to UDP-N-acetyl-alpha-D-mannosaminouronate.

The protein belongs to the UDP-glucose/GDP-mannose dehydrogenase family. WecC subfamily. Homodimer.

It carries out the reaction UDP-N-acetyl-alpha-D-mannosamine + 2 NAD(+) + H2O = UDP-N-acetyl-alpha-D-mannosaminouronate + 2 NADH + 3 H(+). Its pathway is bacterial outer membrane biogenesis; enterobacterial common antigen biosynthesis. Functionally, catalyzes the four-electron oxidation of UDP-N-acetyl-D-mannosamine (UDP-ManNAc), reducing NAD(+) and releasing UDP-N-acetylmannosaminuronic acid (UDP-ManNAcA). The polypeptide is UDP-N-acetyl-D-mannosamine dehydrogenase (Salmonella typhimurium (strain LT2 / SGSC1412 / ATCC 700720)).